A 201-amino-acid chain; its full sequence is uncharacterized protein (201 aa).

This is an uncharacterized protein from Saccharomyces cerevisiae (strain ATCC 204508 / S288c) (Baker's yeast).